The primary structure comprises 283 residues: Acetyl-coenzyme A carboxylase carboxyl transferase subunit beta (283 aa).

Residues 27-283 (VWVKCERCGE…LLDLHLRGEK (257 aa)) enclose the CoA carboxyltransferase N-terminal domain. Positions 31, 34, 50, and 53 each coordinate Zn(2+). Residues 31–53 (CERCGEILFKKELDKNYKVCLKC) form a C4-type zinc finger.

It belongs to the AccD/PCCB family. Acetyl-CoA carboxylase is a heterohexamer composed of biotin carboxyl carrier protein (AccB), biotin carboxylase (AccC) and two subunits each of ACCase subunit alpha (AccA) and ACCase subunit beta (AccD). It depends on Zn(2+) as a cofactor.

The protein localises to the cytoplasm. It carries out the reaction N(6)-carboxybiotinyl-L-lysyl-[protein] + acetyl-CoA = N(6)-biotinyl-L-lysyl-[protein] + malonyl-CoA. It functions in the pathway lipid metabolism; malonyl-CoA biosynthesis; malonyl-CoA from acetyl-CoA: step 1/1. Its function is as follows. Component of the acetyl coenzyme A carboxylase (ACC) complex. Biotin carboxylase (BC) catalyzes the carboxylation of biotin on its carrier protein (BCCP) and then the CO(2) group is transferred by the transcarboxylase to acetyl-CoA to form malonyl-CoA. The chain is Acetyl-coenzyme A carboxylase carboxyl transferase subunit beta from Pelotomaculum thermopropionicum (strain DSM 13744 / JCM 10971 / SI).